A 370-amino-acid chain; its full sequence is Aminomethyltransferase (370 aa).

This sequence belongs to the GcvT family. In terms of assembly, the glycine cleavage system is composed of four proteins: P, T, L and H.

It catalyses the reaction N(6)-[(R)-S(8)-aminomethyldihydrolipoyl]-L-lysyl-[protein] + (6S)-5,6,7,8-tetrahydrofolate = N(6)-[(R)-dihydrolipoyl]-L-lysyl-[protein] + (6R)-5,10-methylene-5,6,7,8-tetrahydrofolate + NH4(+). In terms of biological role, the glycine cleavage system catalyzes the degradation of glycine. This is Aminomethyltransferase from Stenotrophomonas maltophilia (strain K279a).